The sequence spans 362 residues: Probable endopolygalacturonase B (362 aa).

The N-terminal stretch at 1 to 20 (MHFLQNAVVAATMGAALAAA) is a signal peptide. Residues 21–25 (APLEK) constitute a propeptide that is removed on maturation. The cysteines at positions 28 and 43 are disulfide-linked. 6 PbH1 repeats span residues 155-184 (ADHLTITDVTIDNSAGTSKGHNTDAFDIGQ), 185-206 (STYITIDGATVYNQDDCLAINS), 207-227 (GEHITFTNGYCDGGHGLSIGS), 236-257 (VNDVTISNSKVLNSQNGVRIKT), 265-287 (VENVKFEDITLSDISKYGIVVEQ), and 299-344 (TNGV…DVTG). The Proton donor role is filled by Asp-199. A disulfide bridge links Cys-201 with Cys-217. His-221 is an active-site residue. A disulfide bridge connects residues Cys-327 and Cys-332. Asn-334 carries an N-linked (GlcNAc...) asparagine glycan. Residues Cys-351 and Cys-360 are joined by a disulfide bond.

The protein belongs to the glycosyl hydrolase 28 family.

The protein localises to the secreted. The catalysed reaction is (1,4-alpha-D-galacturonosyl)n+m + H2O = (1,4-alpha-D-galacturonosyl)n + (1,4-alpha-D-galacturonosyl)m.. Functionally, involved in maceration and soft-rotting of plant tissue. Hydrolyzes the 1,4-alpha glycosidic bonds of de-esterified pectate in the smooth region of the plant cell wall. The polypeptide is Probable endopolygalacturonase B (pgaB) (Aspergillus niger (strain ATCC MYA-4892 / CBS 513.88 / FGSC A1513)).